Reading from the N-terminus, the 147-residue chain is Hemoglobin subunit beta-H1 (147 aa).

The Globin domain maps to 3-147; that stretch reads HFTAEEKAAI…VANALSHKYH (145 aa). Histidine 64 and histidine 93 together coordinate heme b.

Belongs to the globin family. As to quaternary structure, heterotetramer of two alpha chains and two beta chains. Red blood cells.

Its function is as follows. This is an embryonic beta-type chain. This Mus musculus (Mouse) protein is Hemoglobin subunit beta-H1 (Hbb-bh1).